The primary structure comprises 695 residues: Probable serine/threonine-protein kinase DDB_G0279405 (695 aa).

Disordered stretches follow at residues 119–138 (IVAQ…PQPQ) and 149–192 (QIPT…KRHK). Residues 124-138 (QPQPQPQPQPQPQPQ) are compositionally biased toward pro residues. The span at 149-160 (QIPTTPPQQISQ) shows a compositional bias: low complexity. Residues 161–173 (FNITGNKSPSSIG) show a composition bias toward polar residues. The Protein kinase domain maps to 201-462 (YVFVRKLGKG…IAEIKSHKWT (262 aa)). Residues 207–215 (LGKGTFGKV) and Lys-230 each bind ATP. The active-site Proton acceptor is Asp-329. The interval 491 to 580 (TDHTIKPSDN…NQNQNNNNNS (90 aa)) is disordered. Over residues 510-528 (LSSSSGGESSGIIGSSNES) the composition is skewed to low complexity. Over residues 529–541 (KSMYNNVNSKQKI) the composition is skewed to polar residues. Residues 542–580 (QNQNQNQNQNQNQNQNQNQNQNHNQNQNQNQNQNNNNNS) show a composition bias toward low complexity.

It belongs to the protein kinase superfamily. Ser/Thr protein kinase family.

The catalysed reaction is L-seryl-[protein] + ATP = O-phospho-L-seryl-[protein] + ADP + H(+). The enzyme catalyses L-threonyl-[protein] + ATP = O-phospho-L-threonyl-[protein] + ADP + H(+). The chain is Probable serine/threonine-protein kinase DDB_G0279405 from Dictyostelium discoideum (Social amoeba).